The sequence spans 512 residues: Pantothenate transporter FEN2 (512 aa).

Residues 1-27 lie on the Cytoplasmic side of the membrane; sequence MMKESKSITQHEVERESVSSKRAIKKR. A helical transmembrane segment spans residues 28 to 48; sequence LLLFKIDLFVLSFVCLQYWIN. The Extracellular segment spans residues 49–79; sequence YVDRVGFTNAYISGMKEDLKMVGNDLTVSNT. Residues 80–100 traverse the membrane as a helical segment; the sequence is VFMIGYIVGMVPNNLMLLCVP. Residues 101–102 lie on the Cytoplasmic side of the membrane; the sequence is PR. The chain crosses the membrane as a helical span at residues 103-123; it reads IWLSFCTFAWGLLTLGMYKVT. The Extracellular portion of the chain corresponds to 124–132; the sequence is SFKHICAIR. A helical transmembrane segment spans residues 133-153; it reads FFQALFESCTFSGTHFVLGSW. Topologically, residues 154-164 are cytoplasmic; the sequence is YKEDELPIRSA. A helical transmembrane segment spans residues 165-185; sequence IFTGSGLVGSMFSGFMQTSIF. The Extracellular segment spans residues 186-198; the sequence is THLNGRNGLAGWR. The chain crosses the membrane as a helical span at residues 199 to 219; sequence WLFIIDFCITLPIAIYGFIFF. Residues 220-271 are Cytoplasmic-facing; it reads PGLPDQTSAVSKFSMTRYIFNEQELHYARRRLPARDESTRLDWSTIPRVLKR. Residues 272–292 form a helical membrane-spanning segment; it reads WHWWMFSLVWVLGGENLGFAS. Topologically, residues 293-312 are extracellular; the sequence is NSTFALWLQNQKYTLAQRNN. A helical transmembrane segment spans residues 313–333; it reads YPSGIFAVGIVSTLCSAVYMS. The Cytoplasmic segment spans residues 334–342; the sequence is KIPRARHWH. The chain crosses the membrane as a helical span at residues 343–363; sequence VSVFISLVMVIVAVLIRADPL. The Extracellular segment spans residues 364–372; the sequence is NPKVVFSAQ. A helical transmembrane segment spans residues 373–393; sequence YLGGVAYAGQAVFFSWANIIC. The Cytoplasmic segment spans residues 394–401; the sequence is HADLQERA. Residues 402–422 traverse the membrane as a helical segment; sequence IVLASMNMFSGAVNAWWSILF. Over 423–434 the chain is Extracellular; sequence FASDMVPKFERG. The helical transmembrane segment at 435–455 threads the bilayer; the sequence is CYALLATAISSGIVSVVIRSL. Residues 456 to 512 lie on the Cytoplasmic side of the membrane; the sequence is QIKENLSKKQVPYIDANDMPGEDDDDDNQDNENDGDDESMEVELHNEEMAEISNPFR. The disordered stretch occupies residues 468–512; sequence YIDANDMPGEDDDDDNQDNENDGDDESMEVELHNEEMAEISNPFR. Acidic residues predominate over residues 475 to 496; the sequence is PGEDDDDDNQDNENDGDDESME.

It belongs to the major facilitator superfamily. Allantoate permease family.

The protein localises to the cell membrane. Transports pantothenate into the cell. Also involved in the catabolite repression-mediated regulation of ergosterol biosynthesis and in fenpropimorph resistance. This chain is Pantothenate transporter FEN2 (FEN2), found in Saccharomyces cerevisiae (strain ATCC 204508 / S288c) (Baker's yeast).